Here is a 265-residue protein sequence, read N- to C-terminus: UDP-N-acetylenolpyruvoylglucosamine reductase (265 aa).

An FAD-binding PCMH-type domain is found at 15–169 (GVGGPAELWT…TRVRLKLKER (155 aa)). Arg-149 is an active-site residue. Positions 182-203 (DRARKGQPKRKSAGCAFKNPPG) are disordered. Catalysis depends on Cys-196, which acts as the Proton donor.

This sequence belongs to the MurB family. The cofactor is FAD.

The protein localises to the cytoplasm. The enzyme catalyses UDP-N-acetyl-alpha-D-muramate + NADP(+) = UDP-N-acetyl-3-O-(1-carboxyvinyl)-alpha-D-glucosamine + NADPH + H(+). It functions in the pathway cell wall biogenesis; peptidoglycan biosynthesis. In terms of biological role, cell wall formation. The sequence is that of UDP-N-acetylenolpyruvoylglucosamine reductase from Thermus thermophilus (strain ATCC 27634 / DSM 579 / HB8).